The primary structure comprises 102 residues: Large ribosomal subunit protein bL21 (102 aa).

The protein belongs to the bacterial ribosomal protein bL21 family. Part of the 50S ribosomal subunit. Contacts protein L20.

In terms of biological role, this protein binds to 23S rRNA in the presence of protein L20. The protein is Large ribosomal subunit protein bL21 of Geobacter sp. (strain M21).